The following is a 299-amino-acid chain: Tyrosine recombinase XerC (299 aa).

One can recognise a Core-binding (CB) domain in the interval 1-85 (MERQLDAYCE…AVRGLYHYLN (85 aa)). The 180-residue stretch at 106–285 (RLPKTLDTDR…DFQHLATVYD (180 aa)) folds into the Tyr recombinase domain. Residues Arg146, Lys170, His237, Arg240, and His263 contribute to the active site. The active-site O-(3'-phospho-DNA)-tyrosine intermediate is the Tyr272.

This sequence belongs to the 'phage' integrase family. XerC subfamily. As to quaternary structure, forms a cyclic heterotetrameric complex composed of two molecules of XerC and two molecules of XerD.

The protein resides in the cytoplasm. Its function is as follows. Site-specific tyrosine recombinase, which acts by catalyzing the cutting and rejoining of the recombining DNA molecules. The XerC-XerD complex is essential to convert dimers of the bacterial chromosome into monomers to permit their segregation at cell division. It also contributes to the segregational stability of plasmids. The protein is Tyrosine recombinase XerC of Pseudomonas fluorescens.